The following is a 310-amino-acid chain: Oxygen-dependent coproporphyrinogen-III oxidase (310 aa).

Residue S92 coordinates substrate. A divalent metal cation-binding residues include H96 and H106. H106 functions as the Proton donor in the catalytic mechanism. Residue 108–110 participates in substrate binding; the sequence is NVR. A divalent metal cation is bound by residues H145 and H175. Residues 240–275 are important for dimerization; that stretch reads YVEFNLIWDRGTLFGLQSGGRTESILMSMPPLARWE. 258–260 provides a ligand contact to substrate; sequence GGR.

Belongs to the aerobic coproporphyrinogen-III oxidase family. In terms of assembly, homodimer. A divalent metal cation serves as cofactor.

It localises to the cytoplasm. It catalyses the reaction coproporphyrinogen III + O2 + 2 H(+) = protoporphyrinogen IX + 2 CO2 + 2 H2O. The protein operates within porphyrin-containing compound metabolism; protoporphyrin-IX biosynthesis; protoporphyrinogen-IX from coproporphyrinogen-III (O2 route): step 1/1. Functionally, involved in the heme biosynthesis. Catalyzes the aerobic oxidative decarboxylation of propionate groups of rings A and B of coproporphyrinogen-III to yield the vinyl groups in protoporphyrinogen-IX. This chain is Oxygen-dependent coproporphyrinogen-III oxidase, found in Pectobacterium atrosepticum (strain SCRI 1043 / ATCC BAA-672) (Erwinia carotovora subsp. atroseptica).